We begin with the raw amino-acid sequence, 599 residues long: MRNDFFIMDLKQKVENFPESTGVYIFYDHSGKVIYVGKAKNLRKRVLSYFNDDSPKSNYILKKAKNIEFYITDTETEALILESVLIKKYRPIMNVQLRDDKQYPMLKLTLYEEYPRLVLARRFEDDGARYYGPYTQSGTVRETISMVKKIFNLRSCNWNLPKSKPKRPCLNYFIGNCKAPCQNYITKEEYWEIVKGVIDFLDGKYEEIIEKLYDQMQEYSKNLEFEKAAKIRDKIRLLQNLSEKQKIVSFNRENKDLIQFYVEDHKAKALVYLIREGKLIEKRIFNLTLPEICSNDELIESFVLQYYSRGEIPEVIVVPSPFSEEEVNLKEFLCKRKGSEVVLRTPENEEEEKLLGMALKDLTIESIKSEKVWLALSELQRIFNLQNLPVSIEGYDISNLQGREAVGSRVYFQNGYPEKTKYRRYKIKYTPELPNDYLMLQEVIRRRLKNIEEDPLPDIMLIDGGKGQLSAVLEVFNELKIEPKFILALAKEKEEIFVPGRSEPILLSYDSPALHLLQQVRDEAHRFAVSYHRKLRSKKLMDSHLDKIPGVGEKRMKILLEAFSTLENLKKASLEDLKKVPGISEKIAEKIYLYFHDSS.

Positions 19–95 (ESTGVYIFYD…IKKYRPIMNV (77 aa)) constitute a GIY-YIG domain. The UVR domain maps to 206 to 241 (EEIIEKLYDQMQEYSKNLEFEKAAKIRDKIRLLQNL).

This sequence belongs to the UvrC family. Interacts with UvrB in an incision complex.

Its subcellular location is the cytoplasm. Its function is as follows. The UvrABC repair system catalyzes the recognition and processing of DNA lesions. UvrC both incises the 5' and 3' sides of the lesion. The N-terminal half is responsible for the 3' incision and the C-terminal half is responsible for the 5' incision. The protein is UvrABC system protein C of Dictyoglomus thermophilum (strain ATCC 35947 / DSM 3960 / H-6-12).